Here is a 1124-residue protein sequence, read N- to C-terminus: SH3 and PX domain-containing protein 2A (1124 aa).

Residues 4–128 (YCVQDATVVD…RFFEARPEDV (125 aa)) form the PX domain. The SH3 1 domain maps to 166–225 (MILEQYVVVSNYKKQENSELSLQAGEVVDVIEKNESGWWFVSTSEEQGWVPATYLEAQNG). Threonine 256 is modified (phosphothreonine). One can recognise an SH3 2 domain in the interval 266-325 (SREEKYVTVQPYTSQSKDEIGFEKGVTVEVIRKNLEGWWYIRYLGKEGWAPASYLKKAKD). Serine 405 and serine 420 each carry phosphoserine. Disordered regions lie at residues 414–443 (QRAQ…PKPP), 504–672 (RKKP…KLKA), 692–830 (SVTI…PKKE), and 886–952 (YLVA…GKTS). The region spanning 447-506 (SVEVEYYTIAEFQSCISDGISFRGGQKAEVIDKNSGGWWYVQIGEKEGWAPASYIDKRKK) is the SH3 3 domain. Serine 546 and serine 566 each carry phosphoserine. Over residues 575 to 585 (SGDRGSGDKHP) the composition is skewed to basic and acidic residues. Phosphoserine is present on serine 592. Acidic residues predominate over residues 607-619 (SSEDVALEEETIY). 2 stretches are compositionally biased toward low complexity: residues 633 to 669 (SARG…SLLK) and 692 to 709 (SVTI…SSLS). Residue serine 643 is modified to Phosphoserine. Residues 713–739 (GDLKPRSASDAGIRDTPKVGTKKDPDV) show a composition bias toward basic and acidic residues. A Phosphothreonine modification is found at threonine 728. 3 positions are modified to phosphoserine: serine 764, serine 766, and serine 812. Phosphothreonine is present on threonine 822. Positions 833-892 (GQGATYVTCSAYQKVQDSEISFPEGAEVHVLEKAESGWWYVRFGELEGWAPSHYLVAEEN) constitute an SH3 4 domain. Residues 907–937 (SSQNEGKSDSLEKIEKRVQALNTVNQSKRAT) are a coiled coil. Over residues 912–924 (GKSDSLEKIEKRV) the composition is skewed to basic and acidic residues. Polar residues predominate over residues 926-935 (ALNTVNQSKR). Residues serine 993, serine 1007, serine 1008, and serine 1029 each carry the phosphoserine modification. The segment at 1020 to 1050 (KGRLAERAASQGSESPLLPTQRKGIPVSPVR) is disordered. Positions 1063–1124 (NLKDVYISIA…VPSNYLEKKN (62 aa)) constitute an SH3 5 domain.

Belongs to the SH3PXD2 family. As to quaternary structure, interacts with ADAM12, ADAM15 and ADAM19. Interacts with NOXO1. Interacts (via SH3 domains) with NOXA1; the interaction is direct. Interacts (via N-terminus) with CYBA. Interacts with FASLG. Interacts (via PX domain) with RAB40B (GTP-bound); interaction promotes invadopodia-mediated extracellular matrix degradation. Tyrosine phosphorylated by SRC. Phosphorylation plays a regulatory role in the protein localization. The intramolecular interaction of the PX domain with the third SH3 domain maintains the protein in the cytoplasm and phosphorylation disrupts this interaction, resulting in the redistribution of the protein from cytoplasm to the perimembrane region. Phosphorylated on serine upon DNA damage, probably by ATM or ATR. As to expression, widely expressed. Not found in the spleen and testis.

It is found in the cytoplasm. The protein resides in the cell projection. It localises to the podosome. In terms of biological role, adapter protein involved in invadopodia and podosome formation, extracellular matrix degradation and invasiveness of some cancer cells. Binds matrix metalloproteinases (ADAMs), NADPH oxidases (NOXs) and phosphoinositides. Acts as an organizer protein that allows NOX1- or NOX3-dependent reactive oxygen species (ROS) generation and ROS localization. In association with ADAM12, mediates the neurotoxic effect of amyloid-beta peptide. The sequence is that of SH3 and PX domain-containing protein 2A from Mus musculus (Mouse).